A 397-amino-acid polypeptide reads, in one-letter code: 3-ketoacyl-CoA thiolase, mitochondrial (397 aa).

The N-terminal 16 residues, 1 to 16 (MALLRGVFIVAAKRTP), are a transit peptide targeting the mitochondrion; not cleaved. At K25 the chain carries N6-acetyllysine; alternate. K25 carries the N6-succinyllysine; alternate modification. The active-site Acyl-thioester intermediate is C92. T119 is subject to Phosphothreonine. S121 is modified (phosphoserine). The residue at position 127 (Y127) is a Phosphotyrosine. A Phosphothreonine modification is found at T136. Residue K137 is modified to N6-acetyllysine; alternate. Position 137 is an N6-succinyllysine; alternate (K137). S140 carries the phosphoserine modification. N6-acetyllysine; alternate is present on residues K143, K171, K191, and K209. K143, K171, K191, and K209 each carry N6-succinyllysine; alternate. An N6-succinyllysine mark is found at K212 and K214. 2 residues coordinate CoA: R224 and T227. N6-acetyllysine; alternate is present on K234. Position 234 is an N6-succinyllysine; alternate (K234). An N6-succinyllysine modification is found at K240. An N6-acetyllysine modification is found at K241. A CoA-binding site is contributed by S251. N6-acetyllysine occurs at positions 269 and 270. An N6-acetyllysine; alternate modification is found at K305. K305 bears the N6-succinyllysine; alternate mark. S310 carries the phosphoserine modification. The residue at position 312 (K312) is an N6-acetyllysine; alternate. An N6-succinyllysine; alternate modification is found at K312. A Phosphoserine modification is found at S333. Residues K340 and K375 each carry the N6-acetyllysine modification. Catalysis depends on C382, which acts as the Proton donor/acceptor.

It belongs to the thiolase-like superfamily. Thiolase family. In terms of assembly, homotetramer. Interacts with BNIP3.

The protein localises to the mitochondrion. The catalysed reaction is an acyl-CoA + acetyl-CoA = a 3-oxoacyl-CoA + CoA. It carries out the reaction 2 acetyl-CoA = acetoacetyl-CoA + CoA. It catalyses the reaction acetyl-CoA + H2O = acetate + CoA + H(+). The enzyme catalyses propanoyl-CoA + H2O = propanoate + CoA + H(+). The catalysed reaction is butanoyl-CoA + H2O = butanoate + CoA + H(+). It carries out the reaction hexanoyl-CoA + H2O = hexanoate + CoA + H(+). It catalyses the reaction octanoyl-CoA + H2O = octanoate + CoA + H(+). The enzyme catalyses decanoyl-CoA + H2O = decanoate + CoA + H(+). The catalysed reaction is dodecanoyl-CoA + H2O = dodecanoate + CoA + H(+). It carries out the reaction tetradecanoyl-CoA + H2O = tetradecanoate + CoA + H(+). It catalyses the reaction hexadecanoyl-CoA + H2O = hexadecanoate + CoA + H(+). It functions in the pathway lipid metabolism; fatty acid beta-oxidation. Functionally, in the production of energy from fats, this is one of the enzymes that catalyzes the last step of the mitochondrial beta-oxidation pathway, an aerobic process breaking down fatty acids into acetyl-CoA. Using free coenzyme A/CoA, catalyzes the thiolytic cleavage of medium- to long-chain unbranched 3-oxoacyl-CoAs into acetyl-CoA and a fatty acyl-CoA shortened by two carbon atoms. Also catalyzes the condensation of two acetyl-CoA molecules into acetoacetyl-CoA and could be involved in the production of ketone bodies. Also displays hydrolase activity on various fatty acyl-CoAs. Thereby, could be responsible for the production of acetate in a side reaction to beta-oxidation. Abolishes BNIP3-mediated apoptosis and mitochondrial damage. The sequence is that of 3-ketoacyl-CoA thiolase, mitochondrial (ACAA2) from Bos taurus (Bovine).